The primary structure comprises 631 residues: Nucleoside triphosphatase I (631 aa).

In terms of domain architecture, Helicase ATP-binding spans 42–204; that stretch reads FLGLDSMHSL…TMLVNLLRPG (163 aa). Residue 55–62 coordinates ATP; the sequence is HETGVGKT. A DEXH box motif is present at residues 141-144; that stretch reads DECH. Residues 367 to 532 enclose the Helicase C-terminal domain; sequence KFIDVCLGIL…EFVQLFRVFK (166 aa).

This sequence belongs to the helicase family. NPH I subfamily. Monomer.

The enzyme catalyses a ribonucleoside 5'-triphosphate + H2O = a ribonucleoside 5'-diphosphate + phosphate + H(+). Serves two roles in transcription; it acts in concert with viral termination factor/capping enzyme to catalyze release of UUUUUNU-containing nascent RNA from the elongation complex, and it acts by itself as a polymerase elongation factor to facilitate readthrough of intrinsic pause sites. This chain is Nucleoside triphosphatase I (NPH1), found in Homo sapiens (Human).